The chain runs to 502 residues: Cytochrome P450 3A40 (502 aa).

Residue C443 participates in heme binding.

This sequence belongs to the cytochrome P450 family. It depends on heme as a cofactor.

It is found in the endoplasmic reticulum membrane. The protein resides in the microsome membrane. It catalyses the reaction an organic molecule + reduced [NADPH--hemoprotein reductase] + O2 = an alcohol + oxidized [NADPH--hemoprotein reductase] + H2O + H(+). The sequence is that of Cytochrome P450 3A40 (cyp3a40) from Oryzias latipes (Japanese rice fish).